Reading from the N-terminus, the 258-residue chain is Ribosomal RNA small subunit methyltransferase J (258 aa).

S-adenosyl-L-methionine contacts are provided by residues E123–R124 and D177. Positions I232 to A258 are disordered. Residues H239–P252 show a composition bias toward basic and acidic residues.

This sequence belongs to the methyltransferase superfamily. RsmJ family.

The protein localises to the cytoplasm. The catalysed reaction is guanosine(1516) in 16S rRNA + S-adenosyl-L-methionine = N(2)-methylguanosine(1516) in 16S rRNA + S-adenosyl-L-homocysteine + H(+). Its function is as follows. Specifically methylates the guanosine in position 1516 of 16S rRNA. This is Ribosomal RNA small subunit methyltransferase J from Pseudomonas putida (strain W619).